Here is a 133-residue protein sequence, read N- to C-terminus: p53 and DNA damage-regulated protein 1 (133 aa).

Belongs to the prefoldin subunit beta family. Component of the PAQosome complex which is responsible for the biogenesis of several protein complexes and which consists of R2TP complex members RUVBL1, RUVBL2, RPAP3 and PIH1D1, URI complex members PFDN2, PFDN6, PDRG1, UXT and URI1 as well as ASDURF, POLR2E and DNAAF10/WDR92.

The protein resides in the cytoplasm. In terms of biological role, may play a role in chaperone-mediated protein folding. This chain is p53 and DNA damage-regulated protein 1 (PDRG1), found in Pongo abelii (Sumatran orangutan).